The following is a 63-amino-acid chain: MKQLEIKNLSAAELQAKLVQLKKTYSDIKIAHAISPIENPLQIRSLRRSVARIATEISKRELL.

This sequence belongs to the universal ribosomal protein uL29 family.

This Flavobacterium psychrophilum (strain ATCC 49511 / DSM 21280 / CIP 103535 / JIP02/86) protein is Large ribosomal subunit protein uL29.